Here is a 321-residue protein sequence, read N- to C-terminus: Cytochrome c biogenesis protein CcsA (321 aa).

The next 8 membrane-spanning stretches (helical) occupy residues 9–29, 44–64, 71–91, 98–118, 143–163, 225–245, 260–280, and 288–308; these read ILTH…LMTL, GIIS…IYSG, LYES…IPYL, LSVI…SCLS, MLLS…LLVI, IISL…VWAN, WAFI…NINF, and VASI…LLGI.

It belongs to the CcmF/CycK/Ccl1/NrfE/CcsA family. As to quaternary structure, may interact with Ccs1.

The protein resides in the plastid. Its subcellular location is the chloroplast thylakoid membrane. Functionally, required during biogenesis of c-type cytochromes (cytochrome c6 and cytochrome f) at the step of heme attachment. The protein is Cytochrome c biogenesis protein CcsA of Dioscorea elephantipes (Elephant's foot yam).